The primary structure comprises 455 residues: Glutamyl-tRNA reductase (455 aa).

Substrate-binding positions include 49–52 (TCNR), Ser-109, 114–116 (ETQ), and Gln-120. The active-site Nucleophile is the Cys-50. 189–194 (GAGKMG) is a binding site for NADP(+).

The protein belongs to the glutamyl-tRNA reductase family. Homodimer.

It catalyses the reaction (S)-4-amino-5-oxopentanoate + tRNA(Glu) + NADP(+) = L-glutamyl-tRNA(Glu) + NADPH + H(+). Its pathway is porphyrin-containing compound metabolism; protoporphyrin-IX biosynthesis; 5-aminolevulinate from L-glutamyl-tRNA(Glu): step 1/2. In terms of biological role, catalyzes the NADPH-dependent reduction of glutamyl-tRNA(Glu) to glutamate 1-semialdehyde (GSA). The sequence is that of Glutamyl-tRNA reductase from Bacillus subtilis (strain 168).